The following is a 430-amino-acid chain: MKSIYSLVLCTALTAASPHPAFPQSPLGVPTTSSPSTGTFNSAEEVINASPFLSFHRDIVQIESISSNEHNVGEFIADFLRARNFTVIEQAVTSSSQTENQERFNVFAYPSSNTPEILITSHIDTVPPFIPYSLDTDSTTDNDPSTIRISGRGSVDAKGSVAAQIFAALDVLEQNPSAPLGLLFVVGEETGGDGMRAFSESSLNPAPSAFHTVIFGEPTELALVSGHKGMLGFEIVAKGHAAHSGYPWLGRSAISAVLPALSRVDQLGNIPADKGGLPSSPKYGNTTVNIGRVDAGVAANVVPATARADVAVRLAAGTPDEARDIVRRAVRDATDGNPDVYAEFNTRSEGYPPQDLDTDVDGFDITTVNYGTDVPNLQIHEREDGPVRRYLYGPGSIHVAHGDNEAITVGDLQEAVRGYRKLIEAALQRR.

The N-terminal stretch at 1 to 16 (MKSIYSLVLCTALTAA) is a signal peptide. Asn-84 carries N-linked (GlcNAc...) asparagine glycosylation. A Zn(2+)-binding site is contributed by Asp-156. Glu-188 acts as the Proton acceptor in catalysis. Glu-189 contributes to the Zn(2+) binding site. Asn-285 is a glycosylation site (N-linked (GlcNAc...) asparagine).

This sequence belongs to the peptidase M20A family. Zn(2+) is required as a cofactor.

The protein resides in the secreted. This chain is Probable carboxypeptidase AO090003000058, found in Aspergillus oryzae (strain ATCC 42149 / RIB 40) (Yellow koji mold).